The chain runs to 351 residues: Cell shape-determining protein MreB (351 aa).

ATP-binding positions include 20–22 (TAN), 169–171 (GGT), 217–220 (ERIK), and 299–302 (GGAL).

This sequence belongs to the FtsA/MreB family. In terms of assembly, forms polymers.

It is found in the cytoplasm. In terms of biological role, forms membrane-associated dynamic filaments that are essential for cell shape determination. Acts by regulating cell wall synthesis and cell elongation, and thus cell shape. A feedback loop between cell geometry and MreB localization may maintain elongated cell shape by targeting cell wall growth to regions of negative cell wall curvature. The protein is Cell shape-determining protein MreB of Pasteurella multocida (strain Pm70).